Consider the following 66-residue polypeptide: Neurotoxin Cex11 (66 aa).

The LCN-type CS-alpha/beta domain occupies 1–64 (KEGYPVNIYT…SYPYPEKSCG (64 aa)). 4 disulfides stabilise this stretch: Cys-12–Cys-63, Cys-16–Cys-39, Cys-25–Cys-44, and Cys-29–Cys-46. Cysteine amide is present on Cys-63. A propeptide spanning residues 64–66 (GRK) is cleaved from the precursor.

The protein belongs to the long (4 C-C) scorpion toxin superfamily. Sodium channel inhibitor family. Beta subfamily. Expressed by the venom gland.

It is found in the secreted. Functionally, beta toxins bind voltage-independently at site-4 of sodium channels (Nav) and shift the voltage of activation toward more negative potentials thereby affecting sodium channel activation and promoting spontaneous and repetitive firing. The chain is Neurotoxin Cex11 from Centruroides exilicauda (Bark scorpion).